Consider the following 409-residue polypeptide: Sulfide-quinone reductase (409 aa).

FAD-binding positions include 8 to 12 (GGRFG), 34 to 35 (NK), and Cys-129. The Cysteine persulfide intermediate role is filled by Cys-178. Residues Asn-271, Asp-307, and Gly-317 each contribute to the FAD site. Cys-350 acts as the Cysteine persulfide intermediate in catalysis.

The protein belongs to the SQRD family. As to quaternary structure, monomer. It depends on FAD as a cofactor.

It is found in the membrane. It carries out the reaction n a quinone + n hydrogen sulfide + n H(+) = polysulfur(n-2) + n a quinol. Its activity is regulated as follows. Inhibited by the quinone analog 2-heptyl-4-hydroxyquinolone N-oxide (HQNO). Inactivated by iodoacetamide treatment. Inhibited by KCN. Functionally, catalyzes the oxidation of sulfides, such as hydrogen sulfide, with the help of a quinone. Has the highest activity with caldariella quinone and decylubiquinone, and lower activity with naphtoquinones. Consecutive reaction cycles lead to the accumulation of a polysulfide product on the active site Cys residues; these products are released when they exceed a critical length, typically as cyclooctasulfur. The sequence is that of Sulfide-quinone reductase from Acidianus ambivalens (Desulfurolobus ambivalens).